Here is a 158-residue protein sequence, read N- to C-terminus: NAD(P)H-quinone oxidoreductase subunit J, chloroplastic (158 aa).

It belongs to the complex I 30 kDa subunit family. NDH is composed of at least 16 different subunits, 5 of which are encoded in the nucleus.

The protein resides in the plastid. Its subcellular location is the chloroplast thylakoid membrane. The catalysed reaction is a plastoquinone + NADH + (n+1) H(+)(in) = a plastoquinol + NAD(+) + n H(+)(out). The enzyme catalyses a plastoquinone + NADPH + (n+1) H(+)(in) = a plastoquinol + NADP(+) + n H(+)(out). NDH shuttles electrons from NAD(P)H:plastoquinone, via FMN and iron-sulfur (Fe-S) centers, to quinones in the photosynthetic chain and possibly in a chloroplast respiratory chain. The immediate electron acceptor for the enzyme in this species is believed to be plastoquinone. Couples the redox reaction to proton translocation, and thus conserves the redox energy in a proton gradient. This Helianthus annuus (Common sunflower) protein is NAD(P)H-quinone oxidoreductase subunit J, chloroplastic.